Consider the following 243-residue polypeptide: BTB/POZ domain-containing protein At4g08455 (243 aa).

A coiled-coil region spans residues 19-51 (KECYVEAGETEEELKREIDDLKAKVAFLRLSSS). In terms of domain architecture, BTB spans 64–136 (TDVVLIASED…LYTAEACLDE (73 aa)).

In terms of assembly, interacts with CUL3A and CUL3B.

It participates in protein modification; protein ubiquitination. Functionally, may act as a substrate-specific adapter of an E3 ubiquitin-protein ligase complex (CUL3-RBX1-BTB) which mediates the ubiquitination and subsequent proteasomal degradation of target proteins. The sequence is that of BTB/POZ domain-containing protein At4g08455 from Arabidopsis thaliana (Mouse-ear cress).